The sequence spans 297 residues: N-acetylmuramoyl-L-alanine amidase XlyA (297 aa).

The N-terminal stretch at Met1 to Ala44 is a signal peptide. The N-acetylmuramoyl-L-alanine amidase domain occupies Arg45–Arg140. In terms of domain architecture, LysM spans Gln159–Val203.

Belongs to the N-acetylmuramoyl-L-alanine amidase 2 family.

Its subcellular location is the secreted. It catalyses the reaction Hydrolyzes the link between N-acetylmuramoyl residues and L-amino acid residues in certain cell-wall glycopeptides.. Autolysins are involved in some important biological processes such as cell separation, cell-wall turnover, competence for genetic transformation, formation of the flagella and sporulation. The sequence is that of N-acetylmuramoyl-L-alanine amidase XlyA (xlyA) from Bacillus subtilis (strain 168).